The following is a 424-amino-acid chain: tRNA modification GTPase MnmE (424 aa).

The (6S)-5-formyl-5,6,7,8-tetrahydrofolate site is built by Arg-20, Glu-77, and Arg-117. Residues Gly-212–Arg-351 form the TrmE-type G domain. Asn-222 lines the K(+) pocket. GTP is bound by residues Asn-222–Thr-227, Ser-241–Thr-247, and Asp-266–Gly-269. Ser-226 serves as a coordination point for Mg(2+). The K(+) site is built by Ser-241, Ile-243, and Thr-246. Mg(2+) is bound at residue Thr-247. Lys-424 serves as a coordination point for (6S)-5-formyl-5,6,7,8-tetrahydrofolate.

This sequence belongs to the TRAFAC class TrmE-Era-EngA-EngB-Septin-like GTPase superfamily. TrmE GTPase family. As to quaternary structure, homodimer. Heterotetramer of two MnmE and two MnmG subunits. Requires K(+) as cofactor.

The protein localises to the cytoplasm. In terms of biological role, exhibits a very high intrinsic GTPase hydrolysis rate. Involved in the addition of a carboxymethylaminomethyl (cmnm) group at the wobble position (U34) of certain tRNAs, forming tRNA-cmnm(5)s(2)U34. The protein is tRNA modification GTPase MnmE of Erythrobacter litoralis (strain HTCC2594).